Here is a 312-residue protein sequence, read N- to C-terminus: Aquaporin Lacbi1:391485 (312 aa).

The Cytoplasmic portion of the chain corresponds to 1–50 (MDDKFDDDALPNSKTTPEDYGDKLAEYDYTNTFPNTWMRLREPFREYIAE). Residues 51–71 (FVGVAVLIIFGVGADCQVVLS) form a helical membrane-spanning segment. The Extracellular portion of the chain corresponds to 72-89 (ANTGVAPSPKGDYLSLNC). A helical transmembrane segment spans residues 90 to 110 (GWAIGTAMGVWISGGISGGHI). The NPA 1 motif lies at 111–113 (NPA). Residues 111–128 (NPAVTLALMAWRGFPWWK) lie on the Cytoplasmic side of the membrane. A helical transmembrane segment spans residues 129-149 (VPGFIFAQLLGGIVGAGLVYV). Topologically, residues 150 to 183 (NYIHAIDIVEGGRHIRTLDTAGLFATYAADYMTN) are extracellular. Residue asparagine 183 is glycosylated (N-linked (GlcNAc...) asparagine). The chain crosses the membrane as a helical span at residues 184–204 (VSCFFSEFLATAVLIVVIHAM). The Cytoplasmic portion of the chain corresponds to 205-213 (NDKRNAPPP). A helical membrane pass occupies residues 214-234 (AGLAPLVLFFLILGIGASLGM). Topologically, residues 235–267 (ETGYAINPARDLGPRMLTAMVGYGRQVFAFRNQ) are extracellular. An NPA 2 motif is present at residues 241 to 243 (NPA). Residues 268-288 (YWIWCPVIAPFLGAQVGTIFY) traverse the membrane as a helical segment. The Cytoplasmic segment spans residues 289-312 (DLFFYKGQDNVFGRLGSHIHISPA).

This sequence belongs to the MIP/aquaporin (TC 1.A.8) family.

The protein localises to the membrane. It carries out the reaction H2O(in) = H2O(out). The enzyme catalyses glycerol(in) = glycerol(out). It catalyses the reaction NH4(+)(in) = NH4(+)(out). Water channel required to facilitate the transport of water across membranes. In addition to water, also shows strong glycerol and ammonium transport activities. May be involved in fungal nitrogen (ammonium) support of the plant host in symbiosis. Glycerol accumulation has never been observed in ectomycorrhizal (ECM) fungi, therefore, glycerol permeability of Lacbi1:391485 might be a relict of the affiliation of the protein to the group of aquaglyceroporins, and other osmotic active compounds (e.g. trehalose or mannitol) may have taken over glycerol function in ECM fungi. In Laccaria bicolor (strain S238N-H82 / ATCC MYA-4686) (Bicoloured deceiver), this protein is Aquaporin Lacbi1:391485.